A 110-amino-acid polypeptide reads, in one-letter code: Replication initiation control protein YabA (110 aa).

Residues H84, C86, C100, and C103 each contribute to the Zn(2+) site.

The protein belongs to the YabA family. Homotetramer. Interacts with both DnaA and DnaN, acting as a bridge between these two proteins. Zn(2+) serves as cofactor.

The protein localises to the cytoplasm. Its subcellular location is the nucleoid. Its function is as follows. Involved in control of chromosome replication initiation. Inhibits the cooperative binding of DnaA to the oriC region, thus negatively regulating initiation of chromosome replication. Inhibits the ability of DnaA-ATP to form a helix on DNA; does not disassemble preformed DnaA-DNA helices. Decreases the residence time of DnaA on the chromosome at its binding sites (oriC, replication forks and promoter-binding sites). Tethers DnaA to the replication machinery via the DNA polymerase beta sliding clamp subunit (dnaN). Associates with oriC and other DnaA targets on the chromosome in a DnaA-dependent manner. In Streptococcus mutans serotype c (strain ATCC 700610 / UA159), this protein is Replication initiation control protein YabA.